The following is a 1826-amino-acid chain: Kinesin-like protein KIF13B (1826 aa).

The region spanning 5 to 353 (KVKVAVRIRP…LRYADRAKHI (349 aa)) is the Kinesin motor domain. 103–110 (GQTGSGKS) provides a ligand contact to ATP. Residues 364–439 (NARIIRDLRE…ESLGISLQSS (76 aa)) are a coiled coil. An FHA domain is found at 471-535 (TLIGSANSQD…LHHGDRILWG (65 aa)). The interval 546 to 582 (KKKKKAEREDEDQDPSMKNENSSEQLDVDGDSSSEVS) is disordered. The segment covering 561 to 570 (SMKNENSSEQ) has biased composition (polar residues). 3 coiled-coil regions span residues 607-710 (MQSI…LDKR), 752-772 (SLEK…EWKE), and 1096-1143 (LNAL…ERNA). S661 bears the Phosphoserine mark. Residues 1367-1420 (EQLTGKGKLSRRSISSPNVNRLSGSRQDLIPSYSLGSNKGRWESQQDVSQTTVS) form a disordered region. Polar residues-rich tracts occupy residues 1378–1392 (RSIS…SGSR) and 1409–1420 (ESQQDVSQTTVS). S1379 carries the post-translational modification Phosphoserine. Phosphoserine; by MARK2 is present on S1381. 2 positions are modified to phosphoserine: S1382 and S1391. The residue at position 1410 (S1410) is a Phosphoserine; by MARK2. A phosphoserine mark is found at S1432, S1438, and S1537. A Phosphothreonine modification is found at T1545. S1559 carries the phosphoserine modification. Low complexity predominate over residues 1579 to 1607 (SDALGPGLDAAAPPGSMPTAPEAEPEAPI). Disordered stretches follow at residues 1579 to 1650 (SDAL…RVRR) and 1662 to 1698 (MLAG…DEVP). Residues 1608 to 1624 (SHPPPPTAVPAEEPPGP) are compositionally biased toward pro residues. S1644 carries the phosphoserine modification. Residues 1671-1688 (PGAEGNAPAPGAGGQALA) are compositionally biased toward low complexity. The region spanning 1721–1763 (GPADFQEGTWVGVELDLPSGKNDGSIGGKQYFRCNPGYGLLVR) is the CAP-Gly domain. S1797 carries the post-translational modification Phosphoserine.

It belongs to the TRAFAC class myosin-kinesin ATPase superfamily. Kinesin family. In terms of assembly, binds to DLG1 and DLG4. Interacts (when phosphorylated at Ser-1381 and Ser-1410) with 14-3-3. Phosphorylated at Ser-1381 and Ser-1410 by MARK2, promoting interaction with 14-3-3 and inhibiting microtubule-dependent accumulation and formation of axons. As to expression, ubiquitous.

The protein resides in the cytoplasm. Its subcellular location is the cytoskeleton. The protein localises to the cell projection. It is found in the axon. Functionally, involved in reorganization of the cortical cytoskeleton. Regulates axon formation by promoting the formation of extra axons. May be functionally important for the intracellular trafficking of MAGUKs and associated protein complexes. The sequence is that of Kinesin-like protein KIF13B (KIF13B) from Homo sapiens (Human).